Consider the following 617-residue polypeptide: Regulatory solute carrier protein family 1 member 1 (617 aa).

The segment covering 1 to 22 (MSSLPTSDGFNHPARSSGQSPD) has biased composition (polar residues). Disordered regions lie at residues 1–106 (MSSL…EITV), 155–181 (ENQN…VAQQ), and 217–237 (KGNG…IPSS). Basic and acidic residues-rich tracts occupy residues 43 to 52 (SDSDRIEPKA) and 66 to 83 (SEKK…HASS). Polar residues-rich tracts occupy residues 89-103 (TDQS…SSEE) and 155-165 (ENQNLSQVSDP). The involved in post-transcriptional down-regulation of SLC5A1 stretch occupies residues 410-412 (QCP). One can recognise a UBA domain in the interval 571–611 (IFPATDIDRILRAGFTLQEALGALHRVGGNADLALLVLLAK).

Interacts with YRDC. Expressed in small intestine, kidney and brain.

The protein localises to the cell membrane. Its subcellular location is the nucleus. It is found in the golgi apparatus. The protein resides in the trans-Golgi network. Functionally, mediates transcriptional and post-transcriptional regulation of SLC5A1. Inhibits a dynamin and PKC-dependent exocytotic pathway of SLC5A1. Also involved in transcriptional regulation of SLC22A2. Exhibits glucose-dependent, short-term inhibition of SLC5A1 and SLC22A2 by inhibiting the release of vesicles from the trans-Golgi network. The protein is Regulatory solute carrier protein family 1 member 1 (RSC1A1) of Homo sapiens (Human).